A 568-amino-acid polypeptide reads, in one-letter code: 2-succinyl-5-enolpyruvyl-6-hydroxy-3-cyclohexene-1-carboxylate synthase (568 aa).

The protein belongs to the TPP enzyme family. MenD subfamily. As to quaternary structure, homodimer. Mg(2+) serves as cofactor. Mn(2+) is required as a cofactor. Requires thiamine diphosphate as cofactor.

The enzyme catalyses isochorismate + 2-oxoglutarate + H(+) = 5-enolpyruvoyl-6-hydroxy-2-succinyl-cyclohex-3-ene-1-carboxylate + CO2. It functions in the pathway quinol/quinone metabolism; 1,4-dihydroxy-2-naphthoate biosynthesis; 1,4-dihydroxy-2-naphthoate from chorismate: step 2/7. It participates in quinol/quinone metabolism; menaquinone biosynthesis. Its function is as follows. Catalyzes the thiamine diphosphate-dependent decarboxylation of 2-oxoglutarate and the subsequent addition of the resulting succinic semialdehyde-thiamine pyrophosphate anion to isochorismate to yield 2-succinyl-5-enolpyruvyl-6-hydroxy-3-cyclohexene-1-carboxylate (SEPHCHC). The polypeptide is 2-succinyl-5-enolpyruvyl-6-hydroxy-3-cyclohexene-1-carboxylate synthase (Actinobacillus succinogenes (strain ATCC 55618 / DSM 22257 / CCUG 43843 / 130Z)).